The sequence spans 983 residues: Poly [ADP-ribose] polymerase 1 (983 aa).

2 consecutive PARP-type zinc fingers follow at residues 8-91 (WRAE…ESGA) and 114-194 (YGIE…KKAL). Positions 20, 23, 52, 55, 126, 129, 156, and 159 each coordinate Zn(2+). A disordered region spans residues 197-246 (AKTETAEARQTNSRAGTKRKNDSVDNEKSKLAKSSFDMSTSGALQPCSKE). Residues 215 to 226 (RKNDSVDNEKSK) show a composition bias toward basic and acidic residues. Residues 236 to 375 (TSGALQPCSK…SVKPKRILRP (140 aa)) form the PADR1 zinc-binding domain. The interval 301-345 (GPLALCPMCSGHLSFSGGLYRCHGYISEWSKCSHSTLDPDRIKGK) is zinc ribbon. 4 residues coordinate Zn(2+): C306, C309, C322, and C332. The tract at residues 369 to 397 (PKRILRPVLSGETSQGQGSKDATDSSRSE) is disordered. The segment covering 379-388 (GETSQGQGSK) has biased composition (polar residues). Residues 394 to 484 (SRSERLADLK…RKLPFDKYKI (91 aa)) enclose the BRCT domain. Residues 511 to 611 (HCHILEDGNS…TNFQKQPGKF (101 aa)) enclose the WGR domain. The PARP alpha-helical domain maps to 633-751 (SSNLAPSLIE…DIEIASRIVG (119 aa)). A PARP catalytic domain is found at 758–983 (ESLDDKYKKL…LLKVRFKHKR (226 aa)).

Belongs to the ARTD/PARP family.

The protein localises to the nucleus. The enzyme catalyses NAD(+) + (ADP-D-ribosyl)n-acceptor = nicotinamide + (ADP-D-ribosyl)n+1-acceptor + H(+).. It carries out the reaction L-aspartyl-[protein] + NAD(+) = 4-O-(ADP-D-ribosyl)-L-aspartyl-[protein] + nicotinamide. The catalysed reaction is L-glutamyl-[protein] + NAD(+) = 5-O-(ADP-D-ribosyl)-L-glutamyl-[protein] + nicotinamide. Involved in the base excision repair (BER) pathway, by catalyzing the poly(ADP-ribosyl)ation of a limited number of acceptor proteins involved in chromatin architecture and in DNA metabolism. This modification follows DNA damages and appears as an obligatory step in a detection/signaling pathway leading to the reparation of DNA strand breaks. The polypeptide is Poly [ADP-ribose] polymerase 1 (PARP1) (Arabidopsis thaliana (Mouse-ear cress)).